The following is a 412-amino-acid chain: Phosphoglycerate kinase (412 aa).

Residues 24–26, arginine 44, 67–70, arginine 126, and arginine 170 contribute to the substrate site; these read DLN and HLGR. ATP is bound by residues lysine 220, glycine 308, glutamate 339, and 368 to 371; that span reads GGDS.

The protein belongs to the phosphoglycerate kinase family. Monomer.

It localises to the cytoplasm. The enzyme catalyses (2R)-3-phosphoglycerate + ATP = (2R)-3-phospho-glyceroyl phosphate + ADP. It participates in carbohydrate degradation; glycolysis; pyruvate from D-glyceraldehyde 3-phosphate: step 2/5. In Mycobacteroides abscessus (strain ATCC 19977 / DSM 44196 / CCUG 20993 / CIP 104536 / JCM 13569 / NCTC 13031 / TMC 1543 / L948) (Mycobacterium abscessus), this protein is Phosphoglycerate kinase.